A 336-amino-acid polypeptide reads, in one-letter code: MARNAPAFWQTRSLAARLLLPLSGLFLLLAAVRRQLFRLGIRRAVRLPVPVVVVGNIAVGGSGKTPVVEWLVARLRDAGFTPGIVSRGYGGKAPGAVIVPPHGDVRLFGDEPVLLARLTACPVAVGADRPAAARALLQAYPGCDVIVADDGLQHYPLARDVEIAVVDERTLGNRWLLPAGPLREGPGRLRDVDIIIAHGALSPALSSLLDGRPVFAMHLEGSEFRRLDGAGCRNAEAFRGVRVHAVAGIGRPERFFAQLTRMGLEVVPHPFPDHHPFTAADLDFAPGEPKILTSKDAVKCASFASADTWEFPVKAHIAAGAAERILEKLTHGRPTA.

58-65 serves as a coordination point for ATP; sequence AVGGSGKT.

This sequence belongs to the LpxK family.

The enzyme catalyses a lipid A disaccharide + ATP = a lipid IVA + ADP + H(+). It participates in glycolipid biosynthesis; lipid IV(A) biosynthesis; lipid IV(A) from (3R)-3-hydroxytetradecanoyl-[acyl-carrier-protein] and UDP-N-acetyl-alpha-D-glucosamine: step 6/6. Functionally, transfers the gamma-phosphate of ATP to the 4'-position of a tetraacyldisaccharide 1-phosphate intermediate (termed DS-1-P) to form tetraacyldisaccharide 1,4'-bis-phosphate (lipid IVA). The polypeptide is Tetraacyldisaccharide 4'-kinase (Aromatoleum aromaticum (strain DSM 19018 / LMG 30748 / EbN1) (Azoarcus sp. (strain EbN1))).